A 230-amino-acid polypeptide reads, in one-letter code: Cytochrome b6-f complex iron-sulfur subunit, chloroplastic (230 aa).

The transit peptide at 1–51 directs the protein to the chloroplast; that stretch reads MASFTLSSATPSQLCSSKNGMFAPSLALAKAGRVNVLISKERIRGMKLTCQ. A helical transmembrane segment spans residues 73 to 93; it reads LLGALSLPTGYMLLPYASFFV. The Rieske domain maps to 116 to 212; that stretch reads AAEWLKTHAP…CDVDDGKVVF (97 aa). [2Fe-2S] cluster contacts are provided by cysteine 158, histidine 160, cysteine 176, and histidine 179. Cysteine 163 and cysteine 178 form a disulfide bridge.

The protein belongs to the Rieske iron-sulfur protein family. As to quaternary structure, the 4 large subunits of the cytochrome b6-f complex are cytochrome b6, subunit IV (17 kDa polypeptide, petD), cytochrome f and the Rieske protein, while the 4 small subunits are petG, petL, petM and petN. The complex functions as a dimer. The cofactor is [2Fe-2S] cluster.

It localises to the plastid. The protein resides in the chloroplast thylakoid membrane. The catalysed reaction is 2 oxidized [plastocyanin] + a plastoquinol + 2 H(+)(in) = 2 reduced [plastocyanin] + a plastoquinone + 4 H(+)(out). Component of the cytochrome b6-f complex, which mediates electron transfer between photosystem II (PSII) and photosystem I (PSI), cyclic electron flow around PSI, and state transitions. This is Cytochrome b6-f complex iron-sulfur subunit, chloroplastic (petC) from Spinacia oleracea (Spinach).